Reading from the N-terminus, the 224-residue chain is PKHD-type hydroxylase SO_3913 (224 aa).

A Fe2OG dioxygenase domain is found at 78–176 (QFYPPLFNRY…RTSAFMWLQS (99 aa)). The Fe cation site is built by histidine 96, aspartate 98, and histidine 157. Position 167 (arginine 167) interacts with 2-oxoglutarate.

Fe(2+) serves as cofactor. It depends on L-ascorbate as a cofactor.

In Shewanella oneidensis (strain ATCC 700550 / JCM 31522 / CIP 106686 / LMG 19005 / NCIMB 14063 / MR-1), this protein is PKHD-type hydroxylase SO_3913.